A 177-amino-acid chain; its full sequence is Thymidine kinase (177 aa).

11–18 (GPMFSGKS) serves as a coordination point for ATP. Glutamate 83 serves as the catalytic Proton acceptor. Phenylalanine 113 is a substrate binding site. 2 residues coordinate Zn(2+): cysteine 138 and cysteine 141. Residue 157–161 (IELIG) coordinates substrate. 2 residues coordinate Zn(2+): cysteine 170 and cysteine 173.

This sequence belongs to the thymidine kinase family.

The enzyme catalyses thymidine + ATP = dTMP + ADP + H(+). The polypeptide is Thymidine kinase (TK) (Sheeppox virus (strain KS-1) (SPPV)).